The sequence spans 66 residues: Large ribosomal subunit protein bL31 (66 aa).

Residues C16, C18, C36, and C39 each contribute to the Zn(2+) site.

The protein belongs to the bacterial ribosomal protein bL31 family. Type A subfamily. In terms of assembly, part of the 50S ribosomal subunit. The cofactor is Zn(2+).

Functionally, binds the 23S rRNA. The chain is Large ribosomal subunit protein bL31 from Clostridioides difficile (strain 630) (Peptoclostridium difficile).